Reading from the N-terminus, the 171-residue chain is 6,7-dimethyl-8-ribityllumazine synthase (171 aa).

5-amino-6-(D-ribitylamino)uracil is bound by residues F24, 58-60 (ALE), and 82-84 (AVI). Residue 87-88 (ET) participates in (2S)-2-hydroxy-3-oxobutyl phosphate binding. H90 functions as the Proton donor in the catalytic mechanism. A 5-amino-6-(D-ribitylamino)uracil-binding site is contributed by N115. R129 serves as a coordination point for (2S)-2-hydroxy-3-oxobutyl phosphate. A disordered region spans residues 150-171 (ALDQLGDDEDEEEDEDDEEERA). The span at 154–171 (LGDDEDEEEDEDDEEERA) shows a compositional bias: acidic residues.

This sequence belongs to the DMRL synthase family.

The catalysed reaction is (2S)-2-hydroxy-3-oxobutyl phosphate + 5-amino-6-(D-ribitylamino)uracil = 6,7-dimethyl-8-(1-D-ribityl)lumazine + phosphate + 2 H2O + H(+). It functions in the pathway cofactor biosynthesis; riboflavin biosynthesis; riboflavin from 2-hydroxy-3-oxobutyl phosphate and 5-amino-6-(D-ribitylamino)uracil: step 1/2. In terms of biological role, catalyzes the formation of 6,7-dimethyl-8-ribityllumazine by condensation of 5-amino-6-(D-ribitylamino)uracil with 3,4-dihydroxy-2-butanone 4-phosphate. This is the penultimate step in the biosynthesis of riboflavin. The chain is 6,7-dimethyl-8-ribityllumazine synthase from Burkholderia cenocepacia (strain HI2424).